The following is a 579-amino-acid chain: Tricyclene synthase 0e23, chloroplastic (579 aa).

A chloroplast-targeting transit peptide spans 1 to 66 (MAFCISYLGA…ALCLNAHSTS (66 aa)). Asn27, Asn204, and Asn317 each carry an N-linked (GlcNAc...) asparagine glycan. Asp336 and Asp340 together coordinate Mg(2+). The DDXXD motif motif lies at 336-340 (DDIFD). Residues Asn382 and Asn463 are each glycosylated (N-linked (GlcNAc...) asparagine). Positions 480 and 488 each coordinate Mg(2+). Asn507 carries an N-linked (GlcNAc...) asparagine glycan.

Belongs to the terpene synthase family. Tpsg subfamily. Mg(2+) serves as cofactor. Mn(2+) is required as a cofactor. In terms of tissue distribution, accumulates in flowers; mostly expressed in both upper and lower petal lobes, and, to a lower extent, in tube and stamens.

It localises to the plastid. The protein resides in the chloroplast stroma. The enzyme catalyses (2E)-geranyl diphosphate = tricyclene + diphosphate. It catalyses the reaction (2E)-geranyl diphosphate = (E)-beta-ocimene + diphosphate. It participates in secondary metabolite biosynthesis; terpenoid biosynthesis. Functionally, contributes to floral scent emission. The polypeptide is Tricyclene synthase 0e23, chloroplastic (0e23) (Antirrhinum majus (Garden snapdragon)).